A 129-amino-acid polypeptide reads, in one-letter code: Small ribosomal subunit protein uS11 (129 aa).

The segment at 107-129 (IEDVTPVPHDSIRGKGGRRGRRV) is disordered.

Belongs to the universal ribosomal protein uS11 family. As to quaternary structure, part of the 30S ribosomal subunit.

In terms of biological role, located on the platform of the 30S subunit. The protein is Small ribosomal subunit protein uS11 of Methanoculleus marisnigri (strain ATCC 35101 / DSM 1498 / JR1).